The primary structure comprises 232 residues: Large ribosomal subunit protein uL1 (232 aa).

It belongs to the universal ribosomal protein uL1 family. As to quaternary structure, part of the 50S ribosomal subunit.

Its function is as follows. Binds directly to 23S rRNA. The L1 stalk is quite mobile in the ribosome, and is involved in E site tRNA release. In terms of biological role, protein L1 is also a translational repressor protein, it controls the translation of the L11 operon by binding to its mRNA. The chain is Large ribosomal subunit protein uL1 from Clostridium novyi (strain NT).